We begin with the raw amino-acid sequence, 108 residues long: MMIKQCVICLSLLVFGTTAAHAEETPLVTARHMSKWEEIAVKEAKKRYPLAQVLFKQKVWDRKRKDEAVKQYHLTLREGSKEFGVFVTISFDPYSQKVNKIAILEEYQ.

An N-terminal signal peptide occupies residues 1–22 (MMIKQCVICLSLLVFGTTAAHA).

This is an uncharacterized protein from Bacillus subtilis (strain 168).